A 364-amino-acid chain; its full sequence is Fructose-bisphosphate aldolase C (364 aa).

Tyrosine 5 is modified (phosphotyrosine). Phosphoserine is present on residues serine 36, serine 39, and serine 45. Arginine 56 is a substrate binding site. Lysine 111 is subject to N6-acetyllysine. Position 132 is a phosphoserine (serine 132). Lysine 147 is a substrate binding site. The active-site Proton acceptor is the glutamate 188. The Schiff-base intermediate with dihydroxyacetone-P role is filled by lysine 230.

The protein belongs to the class I fructose-bisphosphate aldolase family. As to quaternary structure, homotetramer. Interacts with ATP6V1E1.

The catalysed reaction is beta-D-fructose 1,6-bisphosphate = D-glyceraldehyde 3-phosphate + dihydroxyacetone phosphate. It functions in the pathway carbohydrate degradation; glycolysis; D-glyceraldehyde 3-phosphate and glycerone phosphate from D-glucose: step 4/4. The protein is Fructose-bisphosphate aldolase C (ALDOC) of Pan troglodytes (Chimpanzee).